A 195-amino-acid chain; its full sequence is Imidazoleglycerol-phosphate dehydratase (195 aa).

Belongs to the imidazoleglycerol-phosphate dehydratase family.

It is found in the cytoplasm. The catalysed reaction is D-erythro-1-(imidazol-4-yl)glycerol 3-phosphate = 3-(imidazol-4-yl)-2-oxopropyl phosphate + H2O. Its pathway is amino-acid biosynthesis; L-histidine biosynthesis; L-histidine from 5-phospho-alpha-D-ribose 1-diphosphate: step 6/9. The sequence is that of Imidazoleglycerol-phosphate dehydratase from Exiguobacterium sp. (strain ATCC BAA-1283 / AT1b).